The following is a 313-amino-acid chain: Intelectin-1b (313 aa).

The first 19 residues, 1–19 (MTQLGFLLFIMIATRVCSA), serve as a signal peptide directing secretion. Residues 32–251 (SFFSSLPRSC…NNERAASALC (220 aa)) enclose the Fibrinogen C-terminal domain. A disulfide bridge connects residues Cys41 and Cys70. Positions 86, 87, 89, 92, 97, 98, and 133 each coordinate Ca(2+). 3 disulfide bridges follow: Cys94/Cys280, Cys199/Cys259, and Cys251/Cys265. The N-linked (GlcNAc...) asparagine glycan is linked to Asn163. Residues Asn260, Glu262, Glu274, and Asp282 each contribute to the Ca(2+) site. A carbohydrate is bound by residues 262–263 (EH) and Glu274. A lipid anchor (GPI-anchor amidated serine) is attached at Ser298. Residues 299–313 (NSREITEAAVLLFYR) constitute a propeptide that is removed on maturation.

As to expression, expressed in the globlet and Paneth cells of the small intestine of infected mice. Expressed in the ileum of uninfected mice.

The protein localises to the cell membrane. The protein resides in the secreted. Its function is as follows. May play a protective role in the innate immune response to parasite infection. This Mus musculus (Mouse) protein is Intelectin-1b (Itln1b).